The chain runs to 291 residues: Inositol-1-monophosphatase (291 aa).

Residues E83, D104, I106, and D107 each coordinate Mg(2+). E83 contributes to the substrate binding site. Residues 106–109, R206, and D235 contribute to the substrate site; that span reads IDGT. D235 contacts Mg(2+).

It belongs to the inositol monophosphatase superfamily. Mg(2+) serves as cofactor.

It carries out the reaction a myo-inositol phosphate + H2O = myo-inositol + phosphate. The polypeptide is Inositol-1-monophosphatase (suhB) (Mycobacterium leprae (strain TN)).